The sequence spans 296 residues: uncharacterized protein (296 aa).

This sequence to Synechocystis PCC 6803 sll0787 and M.jannaschii MJ0640.

This is an uncharacterized protein from Methanocaldococcus jannaschii (strain ATCC 43067 / DSM 2661 / JAL-1 / JCM 10045 / NBRC 100440) (Methanococcus jannaschii).